Reading from the N-terminus, the 284-residue chain is Tropomyosin (284 aa).

Residues 1-284 (MDGIKKKMIA…DQTFAELTGY (284 aa)) adopt a coiled-coil conformation. Positions 111–131 (TKLEEASKTAEESERGRKDLE) are disordered.

This sequence belongs to the tropomyosin family. As to quaternary structure, homodimer.

Its function is as follows. Tropomyosin, in association with the troponin complex, plays a central role in the calcium dependent regulation of muscle contraction. The sequence is that of Tropomyosin from Schistosoma japonicum (Blood fluke).